Here is a 191-residue protein sequence, read N- to C-terminus: Elongation factor P-like protein (191 aa).

This sequence belongs to the elongation factor P family.

The sequence is that of Elongation factor P-like protein from Shewanella sediminis (strain HAW-EB3).